A 261-amino-acid polypeptide reads, in one-letter code: MYKTFFFGWLAGVLLTTITGPLGLFIIWRRMSSFGDTLSHSSLLGISFAVLLNIHPFFMVIITILLFGMLIIWLNYTTVLSLDTILGIIGYSFLSLGMIIINSISNFQKNKLTNYLFGNLLEVTYIDIVILIISCVSILFVLVWYWDLMLLTTINSDLAKIDGVNVLKINSILIFLITLTIGIAIKFIGSLIAISLLIIPAATAQRFSTSPEKMAFFSVIIGIISITWGILMSVYYNLAISPTIVFCSSIVFVISNLKKIL.

7 consecutive transmembrane segments (helical) span residues 5-27 (FFFG…LFII), 48-70 (FAVL…FGML), 85-107 (ILGI…ISNF), 128-150 (IVIL…DLML), 172-194 (ILIF…LIAI), 215-234 (AFFS…LMSV), and 238-257 (LAIS…ISNL).

This sequence belongs to the ABC-3 integral membrane protein family.

Its subcellular location is the cell membrane. Involved in the high-affinity zinc uptake transport system. The polypeptide is High-affinity zinc uptake system membrane protein ZnuB (znuB) (Buchnera aphidicola subsp. Baizongia pistaciae (strain Bp)).